We begin with the raw amino-acid sequence, 494 residues long: 4-trimethylaminobutyraldehyde dehydrogenase (494 aa).

Ser2 is subject to N-acetylserine. Lys30 is subject to N6-acetyllysine; alternate. N6-succinyllysine; alternate is present on Lys30. Lys59 carries the post-translational modification N6-succinyllysine. NAD(+) contacts are provided by residues Lys180 and 232–236 (GSVPT). The active-site Proton acceptor is the Glu254. The Nucleophile role is filled by Cys288. At Lys298 the chain carries N6-acetyllysine. Position 303 is an N6-acetyllysine; alternate (Lys303). Lys303 carries the post-translational modification N6-succinyllysine; alternate. Lys344 is modified (N6-acetyllysine). Residue Glu391 coordinates NAD(+).

The protein belongs to the aldehyde dehydrogenase family. As to quaternary structure, homotetramer.

The protein localises to the cytoplasm. The protein resides in the cytosol. The enzyme catalyses 4-(trimethylamino)butanal + NAD(+) + H2O = 4-(trimethylamino)butanoate + NADH + 2 H(+). The catalysed reaction is an aldehyde + NAD(+) + H2O = a carboxylate + NADH + 2 H(+). It carries out the reaction 4-aminobutanal + NAD(+) + H2O = 4-aminobutanoate + NADH + 2 H(+). It catalyses the reaction formaldehyde + NAD(+) + H2O = formate + NADH + 2 H(+). The enzyme catalyses acetaldehyde + NAD(+) + H2O = acetate + NADH + 2 H(+). The catalysed reaction is imidazole-4-acetaldehyde + NAD(+) + H2O = imidazole-4-acetate + NADH + 2 H(+). It carries out the reaction acrolein + NAD(+) + H2O = acrylate + NADH + 2 H(+). It catalyses the reaction (5-hydroxyindol-3-yl)acetaldehyde + NAD(+) + H2O = (5-hydroxyindol-3-yl)acetate + NADH + 2 H(+). The enzyme catalyses 3,4-dihydroxyphenylacetaldehyde + NAD(+) + H2O = 3,4-dihydroxyphenylacetate + NADH + 2 H(+). The catalysed reaction is spermine monoaldehyde + NAD(+) + H2O = N-(2-carboxyethyl)spermidine + NADH + 2 H(+). It carries out the reaction propanal + NAD(+) + H2O = propanoate + NADH + 2 H(+). It catalyses the reaction butanal + NAD(+) + H2O = butanoate + NADH + 2 H(+). The enzyme catalyses pentanal + NAD(+) + H2O = pentanoate + NADH + 2 H(+). The catalysed reaction is hexanal + NAD(+) + H2O = hexanoate + NADH + 2 H(+). It functions in the pathway amine and polyamine biosynthesis; carnitine biosynthesis. Converts gamma-trimethylaminobutyraldehyde into gamma-butyrobetaine with high efficiency (in vitro). Can catalyze the irreversible oxidation of a broad range of aldehydes to the corresponding acids in an NAD-dependent reaction, but with low efficiency. Catalyzes the oxidation of aldehydes arising from biogenic amines and polyamines. The chain is 4-trimethylaminobutyraldehyde dehydrogenase (ALDH9A1) from Sus scrofa (Pig).